A 523-amino-acid chain; its full sequence is Probable FAD synthase (523 aa).

Residues 20–111 form a molybdenum cofactor biosynthesis protein-like region; that stretch reads AIVVIGDEIL…TDQLHFSDEI (92 aa). Residues 332–489 are FAD synthase; sequence QIALSFNGGK…SLGGRDNTVK (158 aa).

This sequence in the N-terminal section; belongs to the MoaB/Mog family. It in the C-terminal section; belongs to the PAPS reductase family. FAD1 subfamily. It depends on Mg(2+) as a cofactor.

The catalysed reaction is FMN + ATP + H(+) = FAD + diphosphate. It participates in cofactor biosynthesis; FAD biosynthesis; FAD from FMN: step 1/1. Functionally, catalyzes the adenylation of flavin mononucleotide (FMN) to form flavin adenine dinucleotide (FAD) coenzyme. The protein is Probable FAD synthase of Caenorhabditis briggsae.